The following is a 712-amino-acid chain: Integrator complex subunit 9 homolog (712 aa).

The span at 47 to 70 (NNNNNNNNNNNNNNNNNNNNNNNN) shows a compositional bias: low complexity. The segment at 47-73 (NNNNNNNNNNNNNNNNNNNNNNNNSYS) is disordered.

The protein belongs to the metallo-beta-lactamase superfamily. RNA-metabolizing metallo-beta-lactamase-like family. INTS9 subfamily. In terms of assembly, component of the Integrator complex. The core complex associates with protein phosphatase 2A subunits, to form the Integrator-PP2A (INTAC) complex.

The protein localises to the nucleus. It is found in the cytoplasm. Its function is as follows. Component of the integrator complex, a multiprotein complex that terminates RNA polymerase II (Pol II) transcription in the promoter-proximal region of genes. The integrator complex provides a quality checkpoint during transcription elongation by driving premature transcription termination of transcripts that are unfavorably configured for transcriptional elongation: the complex terminates transcription by (1) catalyzing dephosphorylation of the C-terminal domain (CTD) of Pol II subunit polr2a, (2) degrading the exiting nascent RNA transcript via endonuclease activity and (3) promoting the release of Pol II from bound DNA. The integrator complex is also involved in terminating the synthesis of non-coding Pol II transcripts, such as enhancer RNAs (eRNAs), small nuclear RNAs (snRNAs), telomerase RNAs and long non-coding RNAs (lncRNAs). The chain is Integrator complex subunit 9 homolog (ints9) from Dictyostelium discoideum (Social amoeba).